A 406-amino-acid polypeptide reads, in one-letter code: Cysteine desulfurase (406 aa).

Residue Lys-226 is modified to N6-(pyridoxal phosphate)lysine. The active-site Cysteine persulfide intermediate is Cys-364.

This sequence belongs to the class-V pyridoxal-phosphate-dependent aminotransferase family. Csd subfamily. In terms of assembly, homodimer. Interacts with SufE and the SufBCD complex composed of SufB, SufC and SufD. The interaction with SufE is required to mediate the direct transfer of the sulfur atom from the S-sulfanylcysteine. It depends on pyridoxal 5'-phosphate as a cofactor.

The protein localises to the cytoplasm. The enzyme catalyses (sulfur carrier)-H + L-cysteine = (sulfur carrier)-SH + L-alanine. It carries out the reaction L-selenocysteine + AH2 = hydrogenselenide + L-alanine + A + H(+). The protein operates within cofactor biosynthesis; iron-sulfur cluster biosynthesis. In terms of biological role, cysteine desulfurases mobilize the sulfur from L-cysteine to yield L-alanine, an essential step in sulfur metabolism for biosynthesis of a variety of sulfur-containing biomolecules. Component of the suf operon, which is activated and required under specific conditions such as oxidative stress and iron limitation. Acts as a potent selenocysteine lyase in vitro, that mobilizes selenium from L-selenocysteine. Selenocysteine lyase activity is however unsure in vivo. The polypeptide is Cysteine desulfurase (Escherichia coli (strain K12 / MC4100 / BW2952)).